Here is a 192-residue protein sequence, read N- to C-terminus: Early nodulin-like protein 7 (192 aa).

An N-terminal signal peptide occupies residues 1 to 27; the sequence is MMMMMMRSTCNLTLMLCICALVVASMA. The Phytocyanin domain occupies 32–134; the sequence is RDFKVGDEFG…GQRLIVEVMH (103 aa). Residues Asn-48, Asn-89, and Asn-101 are each glycosylated (N-linked (GlcNAc...) asparagine). Cys-88 and Cys-122 are disulfide-bonded. The GPI-anchor amidated serine moiety is linked to residue Ser-166. Positions 167–192 are cleaved as a propeptide — removed in mature form; it reads AASSLPTACLLIPLFLTIASFRFISY.

The protein belongs to the early nodulin-like (ENODL) family. In terms of tissue distribution, mostly expressed in flowers, and, to a lower extent, in seeds, but barely in seedlings, stems, leaves and roots.

It is found in the cell membrane. May act as a carbohydrate transporter. The protein is Early nodulin-like protein 7 of Arabidopsis thaliana (Mouse-ear cress).